A 96-amino-acid polypeptide reads, in one-letter code: Protein RnfH (96 aa).

This sequence belongs to the UPF0125 (RnfH) family.

This is Protein RnfH from Pectobacterium carotovorum subsp. carotovorum (strain PC1).